A 222-amino-acid polypeptide reads, in one-letter code: Probable GTP-binding protein EngB (222 aa).

The 195-residue stretch at 23-217 folds into the EngB-type G domain; it reads NASEIVFLGR…REEIVKYTLG (195 aa). GTP contacts are provided by residues 31–38, 57–61, 82–85, 152–155, and 191–193; these read GRSNVGKS, GKTQL, DLPG, TKAD, and FSA. Residues serine 38 and threonine 59 each coordinate Mg(2+).

It belongs to the TRAFAC class TrmE-Era-EngA-EngB-Septin-like GTPase superfamily. EngB GTPase family. It depends on Mg(2+) as a cofactor.

In terms of biological role, necessary for normal cell division and for the maintenance of normal septation. This is Probable GTP-binding protein EngB from Helicobacter hepaticus (strain ATCC 51449 / 3B1).